We begin with the raw amino-acid sequence, 81 residues long: Large ribosomal subunit protein bL31B (81 aa).

The protein belongs to the bacterial ribosomal protein bL31 family. Type B subfamily. As to quaternary structure, part of the 50S ribosomal subunit.

The protein is Large ribosomal subunit protein bL31B of Lactobacillus helveticus (strain DPC 4571).